The primary structure comprises 427 residues: Probable threonylcarbamoyladenosine tRNA methylthiotransferase (427 aa).

In terms of domain architecture, MTTase N-terminal spans 12–118 (MRVYVEGYGC…AGEILKNYVE (107 aa)). [4Fe-4S] cluster-binding residues include C21, C57, C86, C155, C159, and C162. Positions 141-370 (LKPSLITPLP…DKLRRELSYL (230 aa)) constitute a Radical SAM core domain. Residues 373 to 427 (KKYIGKAMKVLVLDEGKGYTDNFKVVKFEGGEVGEFRKVKITDAKTFGLKGELIL) enclose the TRAM domain.

The protein belongs to the methylthiotransferase family. CDKAL1 subfamily. [4Fe-4S] cluster serves as cofactor.

The catalysed reaction is N(6)-L-threonylcarbamoyladenosine(37) in tRNA + (sulfur carrier)-SH + AH2 + 2 S-adenosyl-L-methionine = 2-methylsulfanyl-N(6)-L-threonylcarbamoyladenosine(37) in tRNA + (sulfur carrier)-H + 5'-deoxyadenosine + L-methionine + A + S-adenosyl-L-homocysteine + 2 H(+). Its function is as follows. Catalyzes the methylthiolation of N6-threonylcarbamoyladenosine (t(6)A), leading to the formation of 2-methylthio-N6-threonylcarbamoyladenosine (ms(2)t(6)A) at position 37 in tRNAs that read codons beginning with adenine. The chain is Probable threonylcarbamoyladenosine tRNA methylthiotransferase from Methanocaldococcus jannaschii (strain ATCC 43067 / DSM 2661 / JAL-1 / JCM 10045 / NBRC 100440) (Methanococcus jannaschii).